A 184-amino-acid chain; its full sequence is (2E)-enoyl-[ACP] glycyltransferase (184 aa).

This sequence belongs to the FcoT family.

The enzyme catalyses a (3R)-3-[(carboxymethyl)amino]fatty acid + holo-[ACP] + H(+) = a (2E)-enoyl-[ACP] + glycine + H2O. It catalyses the reaction (3R)-3-[(carboxylmethyl)amino]decanoate + holo-[ACP] + H(+) = (2E)-decenoyl-[ACP] + glycine + H2O. Involved in the biosynthesis of a unique class of isonitrile lipopeptides (INLPs) that seem to play a role in metal acquisition in M.marinum. Catalyzes a Michael addition of glycine to the beta-position of an alpha,beta-unsaturated fatty acyl-[ACP], producing a (3R)-3-[(carboxymethyl)amino]fatty acid. Acts on the (2E)-decenoyl moiety loaded on the acyl-carrier protein MmaB, forming the product (3R)-3-[(carboxymethyl)amino]decanoate released from MmaB. In Mycobacterium marinum (strain ATCC BAA-535 / M), this protein is (2E)-enoyl-[ACP] glycyltransferase.